We begin with the raw amino-acid sequence, 318 residues long: dTDP-6-deoxy-L-talose 4-dehydrogenase (NAD(P)(+)) (318 aa).

Residues 19–20, 60–61, N95, T120, Y145, and K149 each bind NAD(+); these read FI and DP. 2 residues coordinate substrate: T120 and Y145. Catalysis depends on Y145, which acts as the Proton acceptor.

Belongs to the NAD(P)-dependent epimerase/dehydratase family.

The catalysed reaction is dTDP-6-deoxy-beta-L-talose + NAD(+) = dTDP-4-dehydro-beta-L-rhamnose + NADH + H(+). The enzyme catalyses dTDP-6-deoxy-beta-L-talose + NADP(+) = dTDP-4-dehydro-beta-L-rhamnose + NADPH + H(+). In terms of biological role, catalyzes the reduction of dTDP-6-deoxy-L-lyxo-4-hexulose to dTDP-6-deoxy-L-talose. Can use NAD(+) or NADP(+). The polypeptide is dTDP-6-deoxy-L-talose 4-dehydrogenase (NAD(P)(+)) (tal) (Kitasatospora kifunensis (Streptomyces kifunensis)).